A 144-amino-acid polypeptide reads, in one-letter code: Maximins 5/H4 type 3 (144 aa).

Positions 1-18 (MNFKYIVAVSFLIASAYA) are cleaved as a signal peptide. Propeptides lie at residues 19 to 43 (RSVQ…REIR) and 74 to 123 (TAED…KEKR). Position 143 is a leucine amide (leucine 143).

The protein belongs to the bombinin family. In terms of tissue distribution, expressed by the skin glands.

The protein localises to the secreted. In terms of biological role, maximin-5 shows antibacterial activity against both Gram-positive and Gram-negative bacteria. The only exception is the resistance of E.coli. Also shows antimicrobial activity against fungi C.albicans, A.flavus and P.uticale. It has little hemolytic activity. It does not possess a significant cytotoxicity against tumor cell lines. It does not possess a significant anti-HIV activity. Maximin-H4 shows antibacterial activity against both Gram-positive and Gram-negative bacteria. It also shows antimicrobial activity against the fungus C.albicans. Shows strong hemolytic activity. The protein is Maximins 5/H4 type 3 of Bombina maxima (Giant fire-bellied toad).